A 393-amino-acid polypeptide reads, in one-letter code: Elongation factor Tu (393 aa).

The region spanning 10-203 (KPHVNIGTIG…AVDEFIPEPV (194 aa)) is the tr-type G domain. The segment at 19–26 (GHVDHGKT) is G1. Position 19–26 (19–26 (GHVDHGKT)) interacts with GTP. A Mg(2+)-binding site is contributed by T26. The interval 60-64 (GITIS) is G2. The tract at residues 81–84 (DCPG) is G3. GTP-binding positions include 81–85 (DCPGH) and 136–139 (NKVD). The G4 stretch occupies residues 136–139 (NKVD). The G5 stretch occupies residues 173-175 (SAL).

It belongs to the TRAFAC class translation factor GTPase superfamily. Classic translation factor GTPase family. EF-Tu/EF-1A subfamily. As to quaternary structure, monomer.

The protein localises to the cytoplasm. The catalysed reaction is GTP + H2O = GDP + phosphate + H(+). Functionally, GTP hydrolase that promotes the GTP-dependent binding of aminoacyl-tRNA to the A-site of ribosomes during protein biosynthesis. This Chlorobium limicola (strain DSM 245 / NBRC 103803 / 6330) protein is Elongation factor Tu.